An 883-amino-acid chain; its full sequence is Valine--tRNA ligase (883 aa).

Residues 46-56 carry the 'HIGH' region motif; that stretch reads PNVTGKLHLGH. The 'KMSKS' region motif lies at 520–524; the sequence is KMSKS. K523 serves as a coordination point for ATP. The stretch at 809 to 883 forms a coiled coil; it reads LADLLNVEEE…RIKEMEKLIK (75 aa).

Belongs to the class-I aminoacyl-tRNA synthetase family. ValS type 1 subfamily. In terms of assembly, monomer.

It localises to the cytoplasm. The catalysed reaction is tRNA(Val) + L-valine + ATP = L-valyl-tRNA(Val) + AMP + diphosphate. Catalyzes the attachment of valine to tRNA(Val). As ValRS can inadvertently accommodate and process structurally similar amino acids such as threonine, to avoid such errors, it has a 'posttransfer' editing activity that hydrolyzes mischarged Thr-tRNA(Val) in a tRNA-dependent manner. This is Valine--tRNA ligase from Streptococcus mutans serotype c (strain ATCC 700610 / UA159).